Here is a 102-residue protein sequence, read N- to C-terminus: Citrate lyase acyl carrier protein (102 aa).

Residue Ser14 is modified to O-(phosphoribosyl dephospho-coenzyme A)serine.

This sequence belongs to the CitD family. Oligomer with a subunit composition of (alpha,beta,gamma)6.

The protein resides in the cytoplasm. In terms of biological role, covalent carrier of the coenzyme of citrate lyase. This Streptococcus equi subsp. zooepidemicus (strain MGCS10565) protein is Citrate lyase acyl carrier protein.